The following is a 666-amino-acid chain: NADH-ubiquinone oxidoreductase chain 5 (666 aa).

17 helical membrane-spanning segments follow: residues Leu3 to Leu23, Phe31 to Gly51, Ile59 to Phe78, Thr82 to Ile101, Ile119 to Gly139, Leu168 to Asn190, Phe211 to Ile231, Thr251 to Ile271, Ile283 to Val303, Val311 to Asp333, Phe337 to Ile357, Phe375 to Phe395, Tyr421 to Phe441, Leu467 to Ile487, Trp524 to Leu544, Val572 to Leu594, and Tyr629 to Ile649.

It belongs to the complex I subunit 5 family.

It is found in the mitochondrion inner membrane. The catalysed reaction is a ubiquinone + NADH + 5 H(+)(in) = a ubiquinol + NAD(+) + 4 H(+)(out). Its function is as follows. Core subunit of the mitochondrial membrane respiratory chain NADH dehydrogenase (Complex I) that is believed to belong to the minimal assembly required for catalysis. Complex I functions in the transfer of electrons from NADH to the respiratory chain. The immediate electron acceptor for the enzyme is believed to be ubiquinone. The protein is NADH-ubiquinone oxidoreductase chain 5 (ND5) of Chondrus crispus (Carrageen Irish moss).